The primary structure comprises 603 residues: DNA mismatch repair protein MutL (603 aa).

The span at 337-347 (ISKKQKEDQKS) shows a compositional bias: basic and acidic residues. The interval 337–383 (ISKKQKEDQKSEQIQMSFEENKPVKETPTLFSKPTIPEYVPSDEDAP) is disordered.

It belongs to the DNA mismatch repair MutL/HexB family.

In terms of biological role, this protein is involved in the repair of mismatches in DNA. It is required for dam-dependent methyl-directed DNA mismatch repair. May act as a 'molecular matchmaker', a protein that promotes the formation of a stable complex between two or more DNA-binding proteins in an ATP-dependent manner without itself being part of a final effector complex. In Listeria monocytogenes serotype 4b (strain F2365), this protein is DNA mismatch repair protein MutL.